A 366-amino-acid polypeptide reads, in one-letter code: MEKITVTLGERSYPITIAKGLFDDPSAFAPLKAGQQVMLVTNQTLAPLYLAKVKATLQQARIRVDEVILPDGEQYKSLSVLNDVFSALLENSHSRDTTLIALGGGVIGDLTGFAAACYQRGVRFIQMPTTLLAQVDSSVGGKTAVNHPFGKNMIGAFYQPASVMVDLNCLQTLPARELSSGLAEVIKYGIILDSAFFSWLEDNMDKLLALDNQAMAHCIRRCCELKAEVVAADEKELSGLRALLNLGHTFGHAIETEMGYGVWLHGEAVSAGMVMAARTAQLIDNFSEQDTQRIIRLLERANLPVHGPQNMPPEAYLPHMMRDKKVIAGKLRLVLPTKIGKADLRSDIEHNCVVDAILQCLPYENV.

NAD(+)-binding positions include D71–K76, G105–D109, T129–T130, K142, K151, and C169–T172. Zn(2+) contacts are provided by E184, H248, and H265.

It belongs to the sugar phosphate cyclases superfamily. Dehydroquinate synthase family. NAD(+) is required as a cofactor. The cofactor is Co(2+). Requires Zn(2+) as cofactor.

The protein localises to the cytoplasm. It catalyses the reaction 7-phospho-2-dehydro-3-deoxy-D-arabino-heptonate = 3-dehydroquinate + phosphate. The protein operates within metabolic intermediate biosynthesis; chorismate biosynthesis; chorismate from D-erythrose 4-phosphate and phosphoenolpyruvate: step 2/7. Its function is as follows. Catalyzes the conversion of 3-deoxy-D-arabino-heptulosonate 7-phosphate (DAHP) to dehydroquinate (DHQ). This is 3-dehydroquinate synthase from Photorhabdus laumondii subsp. laumondii (strain DSM 15139 / CIP 105565 / TT01) (Photorhabdus luminescens subsp. laumondii).